The following is a 320-amino-acid chain: Aspartate carbamoyltransferase catalytic subunit (320 aa).

2 residues coordinate carbamoyl phosphate: Arg-68 and Thr-69. Lys-96 is a binding site for L-aspartate. Residues Arg-118, His-148, and Gln-151 each contribute to the carbamoyl phosphate site. L-aspartate-binding residues include Arg-181 and Arg-236. Positions 277 and 278 each coordinate carbamoyl phosphate.

This sequence belongs to the aspartate/ornithine carbamoyltransferase superfamily. ATCase family. Heterododecamer (2C3:3R2) of six catalytic PyrB chains organized as two trimers (C3), and six regulatory PyrI chains organized as three dimers (R2).

The catalysed reaction is carbamoyl phosphate + L-aspartate = N-carbamoyl-L-aspartate + phosphate + H(+). It functions in the pathway pyrimidine metabolism; UMP biosynthesis via de novo pathway; (S)-dihydroorotate from bicarbonate: step 2/3. In terms of biological role, catalyzes the condensation of carbamoyl phosphate and aspartate to form carbamoyl aspartate and inorganic phosphate, the committed step in the de novo pyrimidine nucleotide biosynthesis pathway. In Methylibium petroleiphilum (strain ATCC BAA-1232 / LMG 22953 / PM1), this protein is Aspartate carbamoyltransferase catalytic subunit.